The chain runs to 460 residues: Probable carboxylesterase 11 (460 aa).

Polar residues-rich tracts occupy residues glutamine 26–aspartate 35 and asparagine 132–alanine 145. 2 disordered regions span residues glutamine 26 to proline 52 and asparagine 132 to glycine 161. The Involved in the stabilization of the negatively charged intermediate by the formation of the oxyanion hole motif lies at histidine 173–glycine 175. Catalysis depends on residues serine 289, aspartate 392, and histidine 422.

It belongs to the 'GDXG' lipolytic enzyme family. Expressed in roots, leaves, stems, flowers and siliques.

It catalyses the reaction a carboxylic ester + H2O = an alcohol + a carboxylate + H(+). Its function is as follows. Carboxylesterase acting on esters with varying acyl chain length. The polypeptide is Probable carboxylesterase 11 (CXE11) (Arabidopsis thaliana (Mouse-ear cress)).